Here is a 139-residue protein sequence, read N- to C-terminus: Plasmid stability protein StbB (139 aa).

A PINc domain is found at 2-136 (ILLDTNVISE…EAAGLNVINP (135 aa)). Mg(2+) contacts are provided by D5 and D104.

It belongs to the PINc/VapC protein family. Mg(2+) serves as cofactor.

Its function is as follows. Toxic component of a type II toxin-antitoxin (TA) system. An RNase. Involved in plasmid stability. This Pseudomonas syringae pv. tomato (strain ATCC BAA-871 / DC3000) protein is Plasmid stability protein StbB (stbB).